The following is a 633-amino-acid chain: DNA mismatch repair protein MutL (633 aa).

Residues 338 to 407 are disordered; the sequence is AAPEPERTLP…VPPPTLRAIP (70 aa). A compositionally biased stretch (low complexity) spans 366 to 391; sequence PGSAFPAAARPAPASSAAQPPLSSSA.

The protein belongs to the DNA mismatch repair MutL/HexB family.

This protein is involved in the repair of mismatches in DNA. It is required for dam-dependent methyl-directed DNA mismatch repair. May act as a 'molecular matchmaker', a protein that promotes the formation of a stable complex between two or more DNA-binding proteins in an ATP-dependent manner without itself being part of a final effector complex. The protein is DNA mismatch repair protein MutL of Akkermansia muciniphila (strain ATCC BAA-835 / DSM 22959 / JCM 33894 / BCRC 81048 / CCUG 64013 / CIP 107961 / Muc).